The sequence spans 99 residues: Malonate decarboxylase acyl carrier protein (99 aa).

Ser-25 is subject to O-(phosphoribosyl dephospho-coenzyme A)serine.

This sequence belongs to the MdcC family. Post-translationally, covalently binds the prosthetic group of malonate decarboxylase.

The protein resides in the cytoplasm. Its function is as follows. Subunit of malonate decarboxylase, it is an acyl carrier protein to which acetyl and malonyl thioester residues are bound via a 2'-(5''-phosphoribosyl)-3'-dephospho-CoA prosthetic group and turn over during the catalytic mechanism. This is Malonate decarboxylase acyl carrier protein from Pseudomonas putida (strain GB-1).